The chain runs to 450 residues: ATP-dependent protease ATPase subunit HslU (450 aa).

ATP is bound by residues Val-29, 71–76 (GVGKTE), Asp-261, Glu-328, and Arg-400.

This sequence belongs to the ClpX chaperone family. HslU subfamily. In terms of assembly, a double ring-shaped homohexamer of HslV is capped on each side by a ring-shaped HslU homohexamer. The assembly of the HslU/HslV complex is dependent on binding of ATP.

It is found in the cytoplasm. Functionally, ATPase subunit of a proteasome-like degradation complex; this subunit has chaperone activity. The binding of ATP and its subsequent hydrolysis by HslU are essential for unfolding of protein substrates subsequently hydrolyzed by HslV. HslU recognizes the N-terminal part of its protein substrates and unfolds these before they are guided to HslV for hydrolysis. This is ATP-dependent protease ATPase subunit HslU from Rickettsia akari (strain Hartford).